A 56-amino-acid chain; its full sequence is Metallothionein (56 aa).

Residues C9, C11, C14, C16, C32, C36, H40, C47, H49, C52, and C54 each coordinate Zn(2+).

It belongs to the metallothionein superfamily. Type 14 family.

In terms of biological role, may play a role in essential metal ion homeostasis (especially zinc homeostasis) and resistance to certain non-essential metal ions. Binds four zinc ions. This Synechococcus elongatus (strain ATCC 33912 / PCC 7942 / FACHB-805) (Anacystis nidulans R2) protein is Metallothionein (smtA).